The sequence spans 579 residues: Glypican-2 (579 aa).

Residues 1–21 (MSALRPLLLLLLHLCPGLGPG) form the signal peptide. Residues Ser-55, Ser-92, and Ser-155 are each glycosylated (O-linked (Xyl...) (heparan sulfate) serine). 2 disordered regions span residues 347 to 382 (GTPH…PTTA) and 483 to 552 (ALGQ…GRSR). Over residues 361-379 (APREEASRSWRASAEEERP) the composition is skewed to basic and acidic residues. Ser-498 and Ser-500 each carry an O-linked (Xyl...) (heparan sulfate) serine glycan. Positions 517–527 (VVPPARPPRPP) are enriched in pro residues. Residue Ser-556 is the site of GPI-anchor amidated serine attachment. A propeptide spans 557–579 (SVGLHTPLVLLLLPSALTLLVLR) (removed in mature form).

This sequence belongs to the glypican family. In terms of assembly, interacts (via heparan sulfate) with PTN; this interaction promotes neurite outgrowth through binding of PTN with chondroitin sulfate of proteoglycans, thereby releasing PTPRS of chondroitin sulfate proteoglycans (CSPGs) and leading to binding with heparan sulfate of GPC2. Interacts (heparan sulfate chain) with MDK; this interaction is inhibited by heparin followed by chondroitin sulfate E; this interaction induces GPC2 clustering through heparan sulfate chain; this interaction induces neuronal cell adhesion and neurite outgrowth.

The protein localises to the cell membrane. It is found in the secreted. The protein resides in the extracellular space. Functionally, cell surface proteoglycan that bears heparan sulfate. May fulfill a function related to the motile behaviors of developing neurons. The chain is Glypican-2 (Gpc2) from Mus musculus (Mouse).